The chain runs to 272 residues: Tryptophan synthase alpha chain (272 aa).

Active-site proton acceptor residues include Glu-49 and Asp-60.

This sequence belongs to the TrpA family. In terms of assembly, tetramer of two alpha and two beta chains.

The enzyme catalyses (1S,2R)-1-C-(indol-3-yl)glycerol 3-phosphate + L-serine = D-glyceraldehyde 3-phosphate + L-tryptophan + H2O. It participates in amino-acid biosynthesis; L-tryptophan biosynthesis; L-tryptophan from chorismate: step 5/5. The alpha subunit is responsible for the aldol cleavage of indoleglycerol phosphate to indole and glyceraldehyde 3-phosphate. The protein is Tryptophan synthase alpha chain of Polaromonas sp. (strain JS666 / ATCC BAA-500).